Consider the following 185-residue polypeptide: Ribosome-recycling factor (185 aa).

This sequence belongs to the RRF family.

The protein resides in the cytoplasm. Responsible for the release of ribosomes from messenger RNA at the termination of protein biosynthesis. May increase the efficiency of translation by recycling ribosomes from one round of translation to another. This chain is Ribosome-recycling factor, found in Yersinia enterocolitica serotype O:8 / biotype 1B (strain NCTC 13174 / 8081).